A 483-amino-acid chain; its full sequence is UDP-N-acetylmuramate--L-alanine ligase (483 aa).

Position 125-131 (125-131 (GTHGKTT)) interacts with ATP.

Belongs to the MurCDEF family.

It localises to the cytoplasm. The catalysed reaction is UDP-N-acetyl-alpha-D-muramate + L-alanine + ATP = UDP-N-acetyl-alpha-D-muramoyl-L-alanine + ADP + phosphate + H(+). The protein operates within cell wall biogenesis; peptidoglycan biosynthesis. Its function is as follows. Cell wall formation. The sequence is that of UDP-N-acetylmuramate--L-alanine ligase from Pseudoalteromonas translucida (strain TAC 125).